A 501-amino-acid chain; its full sequence is Ribose import ATP-binding protein RbsA (501 aa).

ABC transporter domains lie at 5–241 and 252–495; these read LQLK…VGRK and APGE…VGKL. Position 37–44 (37–44) interacts with ATP; sequence GENGAGKS.

Belongs to the ABC transporter superfamily. Ribose importer (TC 3.A.1.2.1) family. As to quaternary structure, the complex is composed of an ATP-binding protein (RbsA), two transmembrane proteins (RbsC) and a solute-binding protein (RbsB).

Its subcellular location is the cell inner membrane. It carries out the reaction D-ribose(out) + ATP + H2O = D-ribose(in) + ADP + phosphate + H(+). Part of the ABC transporter complex RbsABC involved in ribose import. Responsible for energy coupling to the transport system. This is Ribose import ATP-binding protein RbsA from Salmonella typhimurium (strain LT2 / SGSC1412 / ATCC 700720).